The primary structure comprises 647 residues: MIKITFPDGAIREFESGITTFEIAQSISNSLAKKALAGKFNGQLIDTTRAIEEDGSIEIVTPDHEDALGVLRHSAAHLFAQAAKRLFPDLCLGVGPAIQDGFYYDTDNKSGQISNDDLPRIEEEMKKIVKENHPCIREEISKEEALELFKDDPYKVELISEHAEDGLTVYRQGEFVDLCRGPHVPSTGRIQVFHLLNVAGAYWRGNSDNAMMQRVYGTAWFDKKDLKAYLKRREEAKERDHRKLGKELDLFMVNPEVGQGLPFWLPNGATIRRELERYIVDKEIASGYQHVYTPPMASVEFYKTSGHWDHYREDMFPTMDMGDGEEFVLRPMNCPHHIEVYKHHVHSYRELPIRIAELGMMHRYEKSGALTGLQRVREMTLNDAHIFVTPEQIKDEFLKALNLIAEIYEDFNLTDYRFRLSYRDPEDKHKYYDNDEMWENAQAMLKEAMDDFGLDYFEAEGEAAFYGPKLDIQVKTALGNEETLSTIQLDFLLPERFDLKYIGADGEEHRPIMIHRGGISTMERFTAILIETYKGAFPTWLAPQQVSVIPISNEAHIDYAWEVARVLKDRGIRAEVDDRNEKMQYKIRAAQTQKIPYQLIVGDKEMEEKAVNVRRYGSKATETKSIEEFVESILADIARKSRPDEVK.

Residues 1–61 (MIKITFPDGA…EEDGSIEIVT (61 aa)) form the TGS domain. Residues 240–538 (DHRKLGKELD…LIETYKGAFP (299 aa)) form a catalytic region. Residues cysteine 334, histidine 385, and histidine 515 each contribute to the Zn(2+) site.

The protein belongs to the class-II aminoacyl-tRNA synthetase family. In terms of assembly, homodimer. Zn(2+) is required as a cofactor.

It is found in the cytoplasm. The catalysed reaction is tRNA(Thr) + L-threonine + ATP = L-threonyl-tRNA(Thr) + AMP + diphosphate + H(+). In terms of biological role, catalyzes the attachment of threonine to tRNA(Thr) in a two-step reaction: L-threonine is first activated by ATP to form Thr-AMP and then transferred to the acceptor end of tRNA(Thr). Also edits incorrectly charged L-seryl-tRNA(Thr). The chain is Threonine--tRNA ligase from Streptococcus agalactiae serotype V (strain ATCC BAA-611 / 2603 V/R).